Reading from the N-terminus, the 183-residue chain is MREYKVVVLGSGGVGKSALTVQFVTGTFIEKYDPTIEDFYRKEIEVDSSPSVLEILDTAGTEQFASMRDLYIKNGQGFILVYSLVNQQSFQDIKPMRDQIVRVKRYEKVPLILVGNKVDLEPEREVMSSEGRALAQEWGCPFMETSAKSKSMVDELFAEIVRQMNYSSLPEKQDQCCTTCVVQ.

10–17 (GSGGVGKS) lines the GTP pocket. The short motif at 32–40 (YDPTIEDFY) is the Effector region element. GTP-binding positions include 57 to 61 (DTAGT) and 116 to 119 (NKVD). 2 S-palmitoyl cysteine lipidation sites follow: C176 and C177. C180 is modified (cysteine methyl ester). The S-geranylgeranyl cysteine moiety is linked to residue C180. The propeptide at 181 to 183 (VVQ) is removed in mature form.

It belongs to the small GTPase superfamily. Ras family. In terms of processing, palmitoylated. Palmitoylation is required for association with recycling endosome membranes and activation of TNIK.

It localises to the cytoplasm. The protein localises to the recycling endosome membrane. The enzyme catalyses GTP + H2O = GDP + phosphate + H(+). In terms of biological role, small GTP-binding protein which cycles between a GDP-bound inactive and a GTP-bound active form. May play a role in cytoskeletal rearrangements and regulate cell spreading through activation of the effector TNIK. May play a role in SRE-mediated gene transcription. The polypeptide is Ras-related protein Rap-2c (RAP2C) (Bos taurus (Bovine)).